The chain runs to 282 residues: Bifunctional protein FolD (282 aa).

163-165 (GRS) is an NADP(+) binding site.

The protein belongs to the tetrahydrofolate dehydrogenase/cyclohydrolase family. Homodimer.

The catalysed reaction is (6R)-5,10-methylene-5,6,7,8-tetrahydrofolate + NADP(+) = (6R)-5,10-methenyltetrahydrofolate + NADPH. The enzyme catalyses (6R)-5,10-methenyltetrahydrofolate + H2O = (6R)-10-formyltetrahydrofolate + H(+). It participates in one-carbon metabolism; tetrahydrofolate interconversion. Functionally, catalyzes the oxidation of 5,10-methylenetetrahydrofolate to 5,10-methenyltetrahydrofolate and then the hydrolysis of 5,10-methenyltetrahydrofolate to 10-formyltetrahydrofolate. This Leuconostoc citreum (strain KM20) protein is Bifunctional protein FolD.